A 261-amino-acid polypeptide reads, in one-letter code: Small ribosomal subunit protein uS2 (261 aa).

N-acetylserine is present on Ser2. Residues Glu211–Trp261 form a disordered region. Residues Asp222–Trp244 show a composition bias toward acidic residues. Low complexity predominate over residues Ala245–Trp261.

The protein belongs to the universal ribosomal protein uS2 family. Component of the small ribosomal subunit. Mature ribosomes consist of a small (40S) and a large (60S) subunit. The 40S subunit contains about 33 different proteins and 1 molecule of RNA (18S). The 60S subunit contains about 49 different proteins and 3 molecules of RNA (25S, 5.8S and 5S). Interacts with RPS21.

It is found in the cytoplasm. In terms of biological role, required for the assembly and/or stability of the 40S ribosomal subunit. Required for the processing of the 20S rRNA-precursor to mature 18S rRNA in a late step of the maturation of 40S ribosomal subunits. This chain is Small ribosomal subunit protein uS2, found in Meyerozyma guilliermondii (strain ATCC 6260 / CBS 566 / DSM 6381 / JCM 1539 / NBRC 10279 / NRRL Y-324) (Yeast).